Here is a 398-residue protein sequence, read N- to C-terminus: Alpha-ketoglutarate-dependent dioxygenase bsc9 (398 aa).

Positions 167 and 169 each coordinate Fe cation. A 2-oxoglutarate-binding site is contributed by T212. H365 serves as a coordination point for Fe cation. R377 is a 2-oxoglutarate binding site.

The protein belongs to the TfdA dioxygenase family. Requires Fe(2+) as cofactor.

It functions in the pathway mycotoxin biosynthesis. Alpha-ketoglutarate dependent dioxygenase; part of the gene cluster that mediates the biosynthesis of the diterpene glucoside brassicicene C. In the first step of the brassicicene C biosynthesis, the bifunctional diterpene synthase bsc8 that possesses both prenyl transferase and terpene cyclase activity, converts isopentenyl diphosphate and dimethylallyl diphosphate into geranylgeranyl diphosphate (GGDP) that is further converted into fusicocca-2,10(14)-diene, the first precursor for brassicicene C. Fusicocca-2,10(14)-diene is then substrate of cytochrome P450 monooxygenase bsc1 for hydroxylation at the C-8 position. Oxidation at C-16 position to aldehyde is then catalyzed by the cytochrome P450 monooyxygenase bsc7, yielding fusicocca-2,10(14)-diene-8-beta,16-diol. Follows the isomerization of the double bond and reduction of aldehyde to alcohol catalyzed by the short-chain dehydrogenase/reductase bsc3 to yield the diol compound fusicocca-1,10(14)-diene-8 beta,16-diol. The next step is the oxidation at the C-3 position of fusicocca-2,10(14)-diene-8-beta,16-diol catalyzed by the alpha-ketoglutarate dependent dioxygenase bsc9, to produce a triol compound. Methylation of the hydroxy group at position 16 is performed by the methyltransferase bsc6. 16-O-methylation is followed by oxidation at the C-13 position to ketone and an alkyl shift of the methyl group leads to brassicicene C. Although the probable acetyltransferase bsc4 is included in the gene cluster, no acetylation reactions are necessary for brassicicene C biosynthesis. However, the fact that brassicicene E, which is a structurally related compound having an acetoxy group at position 12, was previously isolated from another strain of A.brassicicola suggests that the ATCC 96836 strain might also produce a small amount of brassicicene E. This is Alpha-ketoglutarate-dependent dioxygenase bsc9 from Alternaria brassicicola (Dark leaf spot agent).